We begin with the raw amino-acid sequence, 222 residues long: MGLFGKTQEKPPKELVNEWSLKIRKEMRVVDRQIRDIQREEEKVKRSVKDAAKKGQKDVCIVLAKEMIRSRKAVSKLYASKAHMNSVLMGMKNQLAVLRVAGSLQKSTEVMKAMQSLVKIPEIQATMRELSKEMMKAGIIEEMLEDTFESMDDQEEMEEEAEMEIDRILFEITAGALGKAPSKVTDALPEPEPPGAMAASEDEEEEEEALEAMQSRLATLRS.

The N-myristoyl glycine moiety is linked to residue G2. The tract at residues 2 to 113 is intramolecular interaction with C-terminus; it reads GLFGKTQEKP…LQKSTEVMKA (112 aa). The stretch at 22-54 forms a coiled coil; the sequence is KIRKEMRVVDRQIRDIQREEEKVKRSVKDAAKK. Important for autoinhibitory function stretches follow at residues 59–64 and 168–169; these read VCIVLA and IL. The stretch at 141–222 forms a coiled coil; it reads EEMLEDTFES…MQSRLATLRS (82 aa). The intramolecular interaction with N-terminus stretch occupies residues 151–220; that stretch reads MDDQEEMEEE…EAMQSRLATL (70 aa). Positions 151-222 are interaction with VPS4A; the sequence is MDDQEEMEEE…MQSRLATLRS (72 aa). A Glycyl lysine isopeptide (Lys-Gly) (interchain with G-Cter in ubiquitin) cross-link involves residue K179. The tract at residues 180 to 222 is disordered; that stretch reads APSKVTDALPEPEPPGAMAASEDEEEEEEALEAMQSRLATLRS. At S200 the chain carries Phosphoserine. Acidic residues predominate over residues 200–210; the sequence is SEDEEEEEEAL. The MIT-interacting motif motif lies at 201-211; it reads EDEEEEEEALE. 2 interaction with STAMBP regions span residues 203-207 and 221-222; these read EEEEE and RS.

Belongs to the SNF7 family. As to quaternary structure, probable core component of the endosomal sorting required for transport complex III (ESCRT-III). ESCRT-III components are thought to multimerize to form a flat lattice on the perimeter membrane of the endosome. Several assembly forms of ESCRT-III may exist that interact and act sequentially. Forms a metastable monomer in solution; its core structure (without part of the putative autoinhibitory C-terminal acidic region) oligomerizes into a flat lattice via two different dimerization interfaces. In vitro, heteromerizes with CHMP2A (but not CHMP4) to form helical tubular structures that expose membrane-interacting sites on the outside whereas VPS4B can associate on the inside of the tubule. May interact with IGFBP7; the relevance of such interaction however remains unclear. Interacts with CHMP2A. Interacts with CHMP4A; the interaction requires the release of CHMP4A autoinhibition. Interacts with VPS4A. Interacts with STAMBP; the interaction appears to relieve the autoinhibition of CHMP3. Interacts with VTA1. As to expression, widely expressed. Expressed in heart, brain, placenta, lung, liver, skeletal muscle, kidney and pancreas.

The protein resides in the cytoplasm. Its subcellular location is the cytosol. It is found in the membrane. It localises to the endosome. The protein localises to the late endosome membrane. Functionally, probable core component of the endosomal sorting required for transport complex III (ESCRT-III) which is involved in multivesicular bodies (MVBs) formation and sorting of endosomal cargo proteins into MVBs. MVBs contain intraluminal vesicles (ILVs) that are generated by invagination and scission from the limiting membrane of the endosome and mostly are delivered to lysosomes enabling degradation of membrane proteins, such as stimulated growth factor receptors, lysosomal enzymes and lipids. The MVB pathway appears to require the sequential function of ESCRT-O, -I,-II and -III complexes. ESCRT-III proteins mostly dissociate from the invaginating membrane before the ILV is released. The ESCRT machinery also functions in topologically equivalent membrane fission events, such as the terminal stages of cytokinesis and the budding of enveloped viruses (HIV-1 and other lentiviruses). ESCRT-III proteins are believed to mediate the necessary vesicle extrusion and/or membrane fission activities, possibly in conjunction with the AAA ATPase VPS4. Selectively binds to phosphatidylinositol 3,5-bisphosphate PtdIns(3,5)P2 and PtdIns(3,4)P2 in preference to other phosphoinositides tested. Involved in late stages of cytokinesis. Plays a role in endosomal sorting/trafficking of EGF receptor. Isoform 2 prevents stress-mediated cell death and accumulation of reactive oxygen species when expressed in yeast cells. The protein is Charged multivesicular body protein 3 (CHMP3) of Homo sapiens (Human).